The primary structure comprises 25 residues: Small ribosomal subunit protein eS32 (25 aa).

Positions 1–25 are disordered; the sequence is MRAKWRKKRVRRLKRKRRKVRARSK.

This sequence belongs to the eukaryotic ribosomal protein eS32 family. Component of the small ribosomal subunit.

The sequence is that of Small ribosomal subunit protein eS32 (RPL41) from Eremothecium gossypii (strain ATCC 10895 / CBS 109.51 / FGSC 9923 / NRRL Y-1056) (Yeast).